The primary structure comprises 354 residues: Holliday junction branch migration complex subunit RuvB (354 aa).

Residues 4 to 191 (TDKLAAPARV…FGIVARLEFY (188 aa)) are large ATPase domain (RuvB-L). ATP-binding positions include L30, R31, G72, K75, T76, T77, 138–140 (EDY), R181, Y191, and R228. T76 is a binding site for Mg(2+). Residues 192-262 (TAEELARIVT…MADAALAMLD (71 aa)) are small ATPAse domain (RuvB-S). Positions 265–354 (RVGFDLMDRK…GDAGELFGDA (90 aa)) are head domain (RuvB-H). The DNA site is built by R301, R320, and R325.

The protein belongs to the RuvB family. In terms of assembly, homohexamer. Forms an RuvA(8)-RuvB(12)-Holliday junction (HJ) complex. HJ DNA is sandwiched between 2 RuvA tetramers; dsDNA enters through RuvA and exits via RuvB. An RuvB hexamer assembles on each DNA strand where it exits the tetramer. Each RuvB hexamer is contacted by two RuvA subunits (via domain III) on 2 adjacent RuvB subunits; this complex drives branch migration. In the full resolvosome a probable DNA-RuvA(4)-RuvB(12)-RuvC(2) complex forms which resolves the HJ.

It is found in the cytoplasm. The enzyme catalyses ATP + H2O = ADP + phosphate + H(+). Its function is as follows. The RuvA-RuvB-RuvC complex processes Holliday junction (HJ) DNA during genetic recombination and DNA repair, while the RuvA-RuvB complex plays an important role in the rescue of blocked DNA replication forks via replication fork reversal (RFR). RuvA specifically binds to HJ cruciform DNA, conferring on it an open structure. The RuvB hexamer acts as an ATP-dependent pump, pulling dsDNA into and through the RuvAB complex. RuvB forms 2 homohexamers on either side of HJ DNA bound by 1 or 2 RuvA tetramers; 4 subunits per hexamer contact DNA at a time. Coordinated motions by a converter formed by DNA-disengaged RuvB subunits stimulates ATP hydrolysis and nucleotide exchange. Immobilization of the converter enables RuvB to convert the ATP-contained energy into a lever motion, pulling 2 nucleotides of DNA out of the RuvA tetramer per ATP hydrolyzed, thus driving DNA branch migration. The RuvB motors rotate together with the DNA substrate, which together with the progressing nucleotide cycle form the mechanistic basis for DNA recombination by continuous HJ branch migration. Branch migration allows RuvC to scan DNA until it finds its consensus sequence, where it cleaves and resolves cruciform DNA. The chain is Holliday junction branch migration complex subunit RuvB from Cupriavidus taiwanensis (strain DSM 17343 / BCRC 17206 / CCUG 44338 / CIP 107171 / LMG 19424 / R1) (Ralstonia taiwanensis (strain LMG 19424)).